The sequence spans 348 residues: GMP reductase 2 (348 aa).

NADP(+) is bound by residues 26 to 27 (SR), K78, 129 to 131 (DVA), and 180 to 181 (IG). The K(+) site is built by G181, G183, and C186. C186 (thioimidate intermediate) is an active-site residue. T188 (proton donor/acceptor) is an active-site residue. R189 is a binding site for K(+). Residues 219-221 (DGG), 242-243 (GG), 268-270 (GMS), and 286-290 (RASEG) contribute to the GMP site. NADP(+) contacts are provided by residues M269 and 285-286 (YR). K291 carries the N6-acetyllysine modification. 314-317 (STCT) contributes to the NADP(+) binding site.

This sequence belongs to the IMPDH/GMPR family. GuaC type 1 subfamily. Homotetramer. Highly expressed in heart, skeletal muscle, kidney, brain, liver, prostate, spleen, placenta, testis and ovary. Low expression in colon, thymus and peripheral blood leukocytes.

The catalysed reaction is IMP + NH4(+) + NADP(+) = GMP + NADPH + 2 H(+). Its function is as follows. Catalyzes the irreversible NADPH-dependent deamination of GMP to IMP. It functions in the conversion of nucleobase, nucleoside and nucleotide derivatives of G to A nucleotides, and in maintaining the intracellular balance of A and G nucleotides. Plays a role in modulating cellular differentiation. The polypeptide is GMP reductase 2 (Homo sapiens (Human)).